The primary structure comprises 375 residues: Putative F-box only protein 11 (375 aa).

Residues 1-46 (MVSVNLPWELVEEILCRVPPQSLVKFRTVCKQWNSLFDDNKFVNDH) form the F-box domain.

The polypeptide is Putative F-box only protein 11 (FBX11) (Arabidopsis thaliana (Mouse-ear cress)).